The primary structure comprises 270 residues: A-type potassium channel modulatory protein KCNIP2 (270 aa).

Basic and acidic residues predominate over residues 1–17; that stretch reads MRGQGRKESLSESRDLD. Positions 1–34 are disordered; sequence MRGQGRKESLSESRDLDGSYDQLTGHPPGPSKKA. Ser-9 bears the Phosphoserine mark. 2 S-palmitoyl cysteine lipidation sites follow: Cys-45 and Cys-46. Residues 81–137 enclose the EF-hand 1; degenerate domain; it reads FELSTVCHRPEGLEQLQEQTKFTRRELQVLYRGFKNECPSGIVNEENFKQIYSQFFP. 3 consecutive EF-hand domains span residues 140–175, 176–211, and 224–259; these read DSSN…ILRG, TIDD…IYDM, and APRE…DENI. Ca(2+) contacts are provided by Asp-153, Asn-155, Asp-157, Ser-159, Asp-164, Asp-189, Asn-191, Asp-193, Cys-195, Glu-200, Asp-237, Asn-239, Asp-241, and Glu-248. The interval 257–270 is interaction with KCND2; that stretch reads ENIMRSMQLFDNVI.

This sequence belongs to the recoverin family. In terms of assembly, component of heteromultimeric potassium channels. Identified in potassium channel complexes containing KCND1, KCND2, KCND3, KCNIP1, KCNIP2, KCNIP3, KCNIP4, DPP6 and DPP10. The KCND2-KCNIP2 channel complex contains four KCND2 and four KCNIP2 subunits. Interacts with KCND2. Probably part of a complex consisting of KCNIP1, KCNIP2 isoform 3 and KCND2. At least isoform 2 and isoform 3 can self-associate to form homodimers and homotetramers. Isoform 3 interacts with KCNIP1 in a calcium-dependent manner. Interacts with KCND3; each KCNIP2 monomer interacts with two adjacent KCND3 subunits, through both the N-terminal inactivation ball of a KCND3 subunit and a C-terminal helix from the adjacent KCND3 subunit, clamping them together; this interaction modulates the channel gating kinetics. Palmitoylated. Palmitoylation enhances association with the plasma membrane. Expressed in heart, brain and lung. In brain, abundantly expressed in striatum, hippocampus and olfactory bulb, moderately expressed in cerebral cortex and lowly expressed in thalamus and hypothalamus. Isoform 1 is predominant in cerebral cortex, striatum and hippocampus. Isoform 1, isoform 2 and isoform 3 are equally expressed in olfactory bulb. Iisoform 3 is expressed at high levels and isoform 1 at low levels in heart (in PubMed:11263977).

It is found in the cell membrane. In terms of biological role, regulatory subunit of Kv4/D (Shal)-type voltage-gated rapidly inactivating A-type potassium channels. Modulates channel density, inactivation kinetics and rate of recovery from inactivation in a calcium-dependent and isoform-specific manner. Involved in KCND2 and KCND3 trafficking to the cell surface. Essential for the expression of I(To) currents in the heart. Required for normal protein levels of KCND2 in the heart ventricle. This Rattus norvegicus (Rat) protein is A-type potassium channel modulatory protein KCNIP2.